A 351-amino-acid polypeptide reads, in one-letter code: Heat-inducible transcription repressor HrcA (351 aa).

This sequence belongs to the HrcA family.

Its function is as follows. Negative regulator of class I heat shock genes (grpE-dnaK-dnaJ and groELS operons). Prevents heat-shock induction of these operons. The sequence is that of Heat-inducible transcription repressor HrcA from Fusobacterium nucleatum subsp. nucleatum (strain ATCC 25586 / DSM 15643 / BCRC 10681 / CIP 101130 / JCM 8532 / KCTC 2640 / LMG 13131 / VPI 4355).